A 398-amino-acid polypeptide reads, in one-letter code: Acetate kinase (398 aa).

N8 is a binding site for Mg(2+). Position 15 (K15) interacts with ATP. R89 is a substrate binding site. D146 serves as the catalytic Proton donor/acceptor. Residues H206–G210, D283–R285, and G331–N335 each bind ATP. E383 is a Mg(2+) binding site.

Belongs to the acetokinase family. In terms of assembly, homodimer. Mg(2+) serves as cofactor. It depends on Mn(2+) as a cofactor.

It is found in the cytoplasm. It carries out the reaction acetate + ATP = acetyl phosphate + ADP. It participates in metabolic intermediate biosynthesis; acetyl-CoA biosynthesis; acetyl-CoA from acetate: step 1/2. In terms of biological role, catalyzes the formation of acetyl phosphate from acetate and ATP. Can also catalyze the reverse reaction. This Streptococcus pyogenes serotype M12 (strain MGAS2096) protein is Acetate kinase.